Reading from the N-terminus, the 109-residue chain is Biphenyl dioxygenase ferredoxin subunit (109 aa).

A Rieske domain is found at 4-100 (TKACSVDEVP…IRIEGRDVLV (97 aa)). Residues C43, H45, C63, and H66 each contribute to the [2Fe-2S] cluster site.

The protein belongs to the bacterial ring-hydroxylating dioxygenase ferredoxin component family. This dioxygenase system consists of four proteins: the two subunits of the hydroxylase component (BphA1 and BphA2), a ferredoxin (BphA3) and a ferredoxin reductase (BphA4).

Functionally, this protein seems to be a 2Fe-2S ferredoxin. The protein is Biphenyl dioxygenase ferredoxin subunit (bphA3) of Pseudomonas sp. (strain KKS102).